The sequence spans 247 residues: Large ribosomal subunit protein uL24m (247 aa).

One can recognise a KOW domain in the interval 84-117 (FFRGDRIEVLVGKDKGKQGIVTQVIPERNWVIVE).

Belongs to the universal ribosomal protein uL24 family. As to quaternary structure, component of the mitochondrial ribosome large subunit (39S) which comprises a 16S rRNA and about 50 distinct proteins.

The protein localises to the mitochondrion. This Drosophila pseudoobscura pseudoobscura (Fruit fly) protein is Large ribosomal subunit protein uL24m (mRpL24).